The primary structure comprises 98 residues: MSSDDKSKSNDPKTEPKNCDPKCEQKCESKCQPSCLKKLLQRCFEKCPWEKCPAPPKCLPCPSQSPSSCPPQPCTKPCPPKCPSSCPHACPPPCPPPE.

The tract at residues 1 to 26 (MSSDDKSKSNDPKTEPKNCDPKCEQK) is disordered.

Belongs to the cornifin (SPRR) family.

The protein is Late cornified envelope-like proline-rich protein 1 (LELP1) of Homo sapiens (Human).